Here is a 162-residue protein sequence, read N- to C-terminus: MLRQLRLTMDISGWIFLPWRRSMSNMKESPPPPPLASTFDDVIVDYEDPDYLPLPEYPLRPNEPLQTRKQRLLYQSRKRGMLENDLLLSTFAAKHLQSFSAEQTAQYDQLINGVSNDWDIYYWATDVKPTPKEYDTEIMGLLKEHVKNAERVSRLRQPDLNT.

Residues 1–23 (MLRQLRLTMDISGWIFLPWRRSM) constitute a mitochondrion transit peptide.

Belongs to the SDHAF2 family. In terms of assembly, interacts with the flavoprotein subunit within the SDH catalytic dimer.

Its subcellular location is the mitochondrion matrix. Plays an essential role in the assembly of succinate dehydrogenase (SDH), an enzyme complex (also referred to as respiratory complex II) that is a component of both the tricarboxylic acid (TCA) cycle and the mitochondrial electron transport chain, and which couples the oxidation of succinate to fumarate with the reduction of ubiquinone (coenzyme Q) to ubiquinol. Required for flavinylation (covalent attachment of FAD) of the flavoprotein subunit of the SDH catalytic dimer. The polypeptide is Succinate dehydrogenase assembly factor 2-A, mitochondrial (Drosophila erecta (Fruit fly)).